The chain runs to 363 residues: Peptide chain release factor 1 (363 aa).

Gln237 carries the N5-methylglutamine modification. The span at 287-299 shows a compositional bias: basic and acidic residues; sequence EQHKEQASTRKEL. The segment at 287–306 is disordered; it reads EQHKEQASTRKELIGSGDRS.

This sequence belongs to the prokaryotic/mitochondrial release factor family. Methylated by PrmC. Methylation increases the termination efficiency of RF1.

Its subcellular location is the cytoplasm. Peptide chain release factor 1 directs the termination of translation in response to the peptide chain termination codons UAG and UAA. In Ruthia magnifica subsp. Calyptogena magnifica, this protein is Peptide chain release factor 1.